A 96-amino-acid polypeptide reads, in one-letter code: MLERAEVDKVAHLARLSLTDAESEQFTTQLGDILDYFEQLSELDVAEVEPTTRAIDVSNVTRVDHLTPYDDRESILACAPDQEDEYFKVPKIMGES.

This sequence belongs to the GatC family. Heterotrimer of A, B and C subunits.

It catalyses the reaction L-glutamyl-tRNA(Gln) + L-glutamine + ATP + H2O = L-glutaminyl-tRNA(Gln) + L-glutamate + ADP + phosphate + H(+). The catalysed reaction is L-aspartyl-tRNA(Asn) + L-glutamine + ATP + H2O = L-asparaginyl-tRNA(Asn) + L-glutamate + ADP + phosphate + 2 H(+). Allows the formation of correctly charged Asn-tRNA(Asn) or Gln-tRNA(Gln) through the transamidation of misacylated Asp-tRNA(Asn) or Glu-tRNA(Gln) in organisms which lack either or both of asparaginyl-tRNA or glutaminyl-tRNA synthetases. The reaction takes place in the presence of glutamine and ATP through an activated phospho-Asp-tRNA(Asn) or phospho-Glu-tRNA(Gln). The polypeptide is Aspartyl/glutamyl-tRNA(Asn/Gln) amidotransferase subunit C (Acaryochloris marina (strain MBIC 11017)).